Reading from the N-terminus, the 1166-residue chain is Serine/threonine-protein kinase BRI1-like 1 (1166 aa).

Positions 1–21 are cleaved as a signal peptide; sequence MKQRWLLVLILCFFTTSLVMG. Residues 22 to 776 lie on the Extracellular side of the membrane; it reads IHGKHLINDD…IHAKKQTVAT (755 aa). Asparagine 33 is a glycosylation site (N-linked (GlcNAc...) asparagine). Positions 66–73 match the Cys pair 1 motif; that stretch reads CSWRGVSC. LRR repeat units follow at residues 78-99, 103-124, 126-147, 152-173, 176-197, 202-224, 227-248, 252-274, 278-300, 303-325, 327-349, 352-375, 376-397, 403-424, 427-449, 451-473, 476-498, 500-522, 524-547, and 548-570; these read RIVGLDLRNSGLTGTLNLVNLT, NLQNLYLQGNYFSSGGDSSGSD, YLQVLDLSSNSISDYSMVDYVF, NLVSVNISNNKLVGKLGFAPSS, SLTTVDLSYNILSDKIPESFIS, SLKYLDLTHNNLSGDFSDLSFGI, NLTFFSLSQNNLSGDKFPITLP, FLETLNISRNNLAGKIPNGEYWG, NLKQLSLAHNRLSGEIPPELSLL, TLVILDLSGNTFSGELPSQFTAC, WLQNLNLGNNYLSGDFLNTVVSK, GITYLYVAYNNISGSVPISLTNCS, NLRVLDLSSNGFTGNVPSGFCS, VLEKILIANNYLSGTVPMELGK, SLKTIDLSFNELTGPIPKEIWML, NLSDLVMWANNLTGTIPEGVCVK, NLETLILNNNLLTGSIPESISRC, NMIWISLSSNRLTGKIPSGIGNL, KLAILQLGNNSLSGNVPRQLGNCK, and SLIWLDLNSNNLTGDLPGELASQ. The N-linked (GlcNAc...) asparagine glycan is linked to asparagine 97. Asparagine 157 is a glycosylation site (N-linked (GlcNAc...) asparagine). N-linked (GlcNAc...) asparagine glycans are attached at residues asparagine 212, asparagine 227, asparagine 237, and asparagine 257. Asparagine 362 and asparagine 373 each carry an N-linked (GlcNAc...) asparagine glycan. N-linked (GlcNAc...) asparagine glycosylation is found at asparagine 451 and asparagine 461. N-linked (GlcNAc...) asparagine glycans are attached at residues asparagine 521, asparagine 532, asparagine 558, and asparagine 638. LRR repeat units lie at residues 664–686, 688–710, and 712–734; these read YLQVLNLGHNRITGTIPDSFGGL, AIGVLDLSHNNLQGYLPGSLGSL, and FLSDLDVSNNNLTGPIPFGGQLT. Residues asparagine 722 and asparagine 743 are each glycosylated (N-linked (GlcNAc...) asparagine). Positions 748–755 match the Cys pair 2 motif; sequence CGVPLRPC. The helical transmembrane segment at 777 to 797 threads the bilayer; it reads AVIAGIAFSFMCFVMLVMALY. Over 798–1166 the chain is Cytoplasmic; it reads RVRKVQKKEQ…LVEESRDKEP (369 aa). A phosphothreonine mark is found at threonine 848 and threonine 856. The 289-residue stretch at 859-1147 folds into the Protein kinase domain; the sequence is FSAETMVGSG…KADTEEDESL (289 aa). ATP-binding positions include 865 to 873 and lysine 887; that span reads VGSGGFGEV. Phosphotyrosine is present on tyrosine 932. The Proton acceptor role is filled by aspartate 987. Phosphoserine is present on serine 1022. Tyrosine 1030 carries the post-translational modification Phosphotyrosine. The residue at position 1141 (threonine 1141) is a Phosphothreonine. The tract at residues 1142-1166 is disordered; it reads EEDESLDEFSLKETPLVEESRDKEP.

Belongs to the protein kinase superfamily. Ser/Thr protein kinase family. Predominantly expressed in vascular tissues. From 7 day old seedlings, it is expressed in the columella cells of the root tip, in the vascular initials in the meristematic region of the root and in vascular tissues. After germination, it is expressed in the stele cell and in the early differentiation zone of the root, where the expression continues from the root to the hypocotyls and cotyledons following the midvein. In mature plants, it is expressed in the vasculature of the leaf, predominantly in the midvein, and in the vascular bundles of inflorescence stems. Localizes to procambial cells of the vascular bundles located between the differentiating xylem and the phloem.

The protein localises to the cell membrane. The enzyme catalyses L-seryl-[protein] + ATP = O-phospho-L-seryl-[protein] + ADP + H(+). It catalyses the reaction L-threonyl-[protein] + ATP = O-phospho-L-threonyl-[protein] + ADP + H(+). Receptor with a serine/threonine-protein kinase activity. Regulates, in response to brassinosteroid binding, a signaling cascade involved in plant development. Binds brassinolide. May be involved in cell growth and vascular differentiation. In Arabidopsis thaliana (Mouse-ear cress), this protein is Serine/threonine-protein kinase BRI1-like 1 (BRL1).